A 328-amino-acid chain; its full sequence is Nickel import system permease protein NikB (328 aa).

The next 6 helical transmembrane spans lie at 11–31, 104–124, 139–159, 170–190, 229–249, and 279–299; these read LMQMIVVLFVISTLTFILMKL, LLISFSTLVVSLCISIPLGII, VISTLSISLPAFFIGIILLFI, ILSQFILPVITLSLGMCAYII, ILPIIPLLGISLGSLIGGTVV, and VLFIGFFVVIINTIADLLTLL. The ABC transmembrane type-1 domain maps to 100–297; it reads APITLLISFS…IINTIADLLT (198 aa).

Belongs to the binding-protein-dependent transport system permease family. OppBC subfamily. In terms of assembly, the complex is composed of two ATP-binding proteins (NikD and NikE), two transmembrane proteins (NikB and NikC) and a solute-binding protein (NikA).

Its subcellular location is the cell membrane. Part of the ABC transporter complex NikABCDE (Opp2) involved in nickel import. Probably responsible for the translocation of the substrate across the membrane. This is Nickel import system permease protein NikB from Staphylococcus aureus (strain USA300).